Reading from the N-terminus, the 111-residue chain is SPbeta prophage-derived uncharacterized protein YolC (111 aa).

The first 25 residues, Met1–Ala25, serve as a signal peptide directing secretion.

The sequence is that of SPbeta prophage-derived uncharacterized protein YolC (yolC) from Bacillus subtilis (strain 168).